We begin with the raw amino-acid sequence, 165 residues long: Lipoprotein signal peptidase (165 aa).

3 helical membrane passes run 6-26 (SSVE…LLII), 68-88 (GKID…LFYF), and 95-115 (ISFL…GNMI). Residues D125 and D141 contribute to the active site. A helical membrane pass occupies residues 132-152 (IWSFIFNFADVWINIGVVLII).

Belongs to the peptidase A8 family.

The protein resides in the cell inner membrane. It carries out the reaction Release of signal peptides from bacterial membrane prolipoproteins. Hydrolyzes -Xaa-Yaa-Zaa-|-(S,diacylglyceryl)Cys-, in which Xaa is hydrophobic (preferably Leu), and Yaa (Ala or Ser) and Zaa (Gly or Ala) have small, neutral side chains.. The protein operates within protein modification; lipoprotein biosynthesis (signal peptide cleavage). This protein specifically catalyzes the removal of signal peptides from prolipoproteins. In Fusobacterium nucleatum subsp. nucleatum (strain ATCC 25586 / DSM 15643 / BCRC 10681 / CIP 101130 / JCM 8532 / KCTC 2640 / LMG 13131 / VPI 4355), this protein is Lipoprotein signal peptidase.